We begin with the raw amino-acid sequence, 1152 residues long: Receptor-type guanylate cyclase gcy-8 (1152 aa).

Residues 1 to 21 (MRTKKAFLLLTFNVLIYLAAC) form the signal peptide. At 22 to 506 (QETERILANN…GYRNERCDYT (485 aa)) the chain is on the extracellular side. N-linked (GlcNAc...) asparagine glycans are attached at residues Asn31, Asn55, Asn385, and Asn465. The helical transmembrane segment at 507-527 (LIIIGAALILLFIVAAVSAFF) threads the bilayer. Over 528 to 1152 (AQKILEKRAL…NLKNPTGLQR (625 aa)) the chain is Cytoplasmic. The Protein kinase domain maps to 567-857 (RTKMSNMNYG…RIKLNVETYL (291 aa)). ATP is bound by residues 573–581 (MNYGSRNHA) and Lys593. Residues 861–899 (GSLVDQMTRMMEQYANNLEKLVAERTGMLEEANQRADRL) adopt a coiled-coil conformation. A Guanylate cyclase domain is found at 927-1057 (TVLFSDIVGF…DTVNMASRME (131 aa)). 3 residues coordinate Mg(2+): Asp932, Ile933, and Asp976.

The protein belongs to the adenylyl cyclase class-4/guanylyl cyclase family. As to expression, expressed bilaterally in AFD sensory neurons.

It is found in the cell membrane. The protein localises to the cell projection. The protein resides in the cilium. The catalysed reaction is GTP = 3',5'-cyclic GMP + diphosphate. Inhibited by chloride with an IC(50) of 60 mM. Guanylate cyclase involved in the production of the second messenger cGMP. Regulates thermotaxis responses in AFD sensory neurons. May regulate AFD neuronal activity such as calcium responses to temperature gradients. Maintains the microvilli receptive ending morphology of the AFD thermosensory neurons by regulating cGMP levels downstream of kcc-3. cGMP levels antagonize the actin cytoskeleton regulator wsp-1. In Caenorhabditis elegans, this protein is Receptor-type guanylate cyclase gcy-8.